The following is a 176-amino-acid chain: Natural cytotoxicity triggering receptor 3 (176 aa).

A signal peptide spans 1 to 18 (MAWMLLLILIMVYPGSCA). Residues 19-126 (LWVSQPPEIR…VGTGNGTRLV (108 aa)) enclose the Ig-like domain. Topologically, residues 19–135 (LWVSQPPEIR…VVEKEYPQLG (117 aa)) are extracellular. Cys-39 and Cys-108 are joined by a disulfide. Residues Asn-42 and Asn-121 are each glycosylated (N-linked (GlcNAc...) asparagine). The chain crosses the membrane as a helical span at residues 136–156 (AGTVLLLRAGFYAVSFLSVAV). Residues 157–176 (GSTLYYQGKCHCHMGTHCHS) lie on the Cytoplasmic side of the membrane.

The protein belongs to the natural cytotoxicity receptor (NCR) family. As to quaternary structure, homodimer in the unliganted form. Interacts with CD3Z. Interacts with and is activated by binding to NCR3LG1. Interacts with and is activated by binding to BAG6. Interacts with and is inhibited by binding to LGALS3.

The protein resides in the cell membrane. Cell membrane receptor of natural killer/NK cells that is activated by binding of extracellular ligands including BAG6 and NCR3LG1. Stimulates NK cells cytotoxicity toward neighboring cells producing these ligands. It controls, for instance, NK cells cytotoxicity against tumor cells. Engagement of NCR3 by BAG6 also promotes myeloid dendritic cells (DC) maturation, both through killing DCs that did not acquire a mature phenotype, and inducing the release by NK cells of TNFA and IFNG that promote DC maturation. This chain is Natural cytotoxicity triggering receptor 3 (NCR3), found in Macaca fascicularis (Crab-eating macaque).